The primary structure comprises 607 residues: Glycosyltransferase 25 family member (607 aa).

Residues 1-22 (MKPVSCVGLLVLLVGVLVTVKG) form the signal peptide. N-linked (GlcNAc...) asparagine glycosylation is found at Asn226, Asn254, Asn514, and Asn565. Residues 566-607 (DTSDSSAEKKGDKEQLSSKTLMDSTISRDEHELSVANRKSEL) are disordered. Composition is skewed to basic and acidic residues over residues 571–581 (SAEKKGDKEQL) and 591–607 (ISRD…KSEL). The Prevents secretion from ER motif lies at 604-607 (KSEL).

This sequence belongs to the glycosyltransferase 25 family.

Its subcellular location is the endoplasmic reticulum lumen. In Aedes aegypti (Yellowfever mosquito), this protein is Glycosyltransferase 25 family member.